The primary structure comprises 109 residues: Small ribosomal subunit protein eS25 (109 aa).

The interval 1-36 (MGGASKKPISTVEKRMKKMAEEQQKKQQKRATTKTG) is disordered. The segment covering 12–25 (VEKRMKKMAEEQQK) has biased composition (basic and acidic residues).

It belongs to the eukaryotic ribosomal protein eS25 family.

The sequence is that of Small ribosomal subunit protein eS25 (rps25e) from Sulfurisphaera tokodaii (strain DSM 16993 / JCM 10545 / NBRC 100140 / 7) (Sulfolobus tokodaii).